The sequence spans 296 residues: Enoyl-CoA hydratase ACTT3 (296 aa).

Residues Pro-294–Leu-296 carry the Peroxisomal targeting signal type 1 motif.

Belongs to the enoyl-CoA hydratase/isomerase family.

The protein localises to the peroxisome. It carries out the reaction a (3S)-3-hydroxyacyl-CoA = a (2E)-enoyl-CoA + H2O. The enzyme catalyses a 4-saturated-(3S)-3-hydroxyacyl-CoA = a (3E)-enoyl-CoA + H2O. Its pathway is mycotoxin biosynthesis. In terms of biological role, enoyl-CoA hydratase; part of the gene clusters that mediate the biosynthesis of the host-selective toxins (HSTs) ACT-toxins responsible for brown spot of tangerine disease by the tangerine pathotype which affects tangerines and mandarins. ACT-toxins consist of three moieties, 9,10-epoxy-8-hydroxy-9-methyl-decatrienoic acid (EDA), valine and a polyketide. ACT-toxin I is toxic to both citrus and pear; toxin II the 5''-deoxy derivative of ACT-toxin I, is highly toxic to pear and slightly toxic to citrus. On cellular level, ACT-toxins affect plasma membrane of susceptible cells and cause a sudden increase in loss of K(+) after a few minutes of toxin treatment. The acyl-CoA ligase ACTT1, the hydrolase ACTT2, the enoyl-CoA hydratases ACTT3 and ACTT6, and the acyl-CoA synthetase ACTT5 are all involved in the biosynthesis of the AK-, AF- and ACT-toxin common 9,10-epoxy-8-hydroxy-9-methyl-decatrienoic acid (EDA) structural moiety. The exact role of each enzyme, and of additional enzymes identified within the AF-toxin clusters have still to be determined. On the other hand, ACTTS1 to ACTTS4 are specific to the tangerine pathotype. The function of ACTTS3 is to elongate the polyketide chain portion of ACT-toxin that is unique to this toxin. The enoyl-reductase ACTTS2 might complement the missing enoyl-reductase (ER) domain in ACTTS3 in the synthesis of the polyketide portion of ACT-toxin. The roles of the nonribosomal peptide synthetases-related proteins ACTTS1 and ACTTS4 have also still not been elucidated. This is Enoyl-CoA hydratase ACTT3 from Alternaria alternata (Alternaria rot fungus).